Reading from the N-terminus, the 652-residue chain is Sodium-dependent phosphate transporter 2 (652 aa).

The Extracellular segment spans residues 1 to 5 (MAMDE). A helical transmembrane segment spans residues 6–26 (YLWMVILGFIIAFILAFSVGA). Residues 27-46 (NDVANSFGTAVGSGVVTLRQ) lie on the Cytoplasmic side of the membrane. The helical transmembrane segment at 47–67 (ACILASIFETTGSVLLGAKVG) threads the bilayer. Over 68-86 (ETIRKGIIDVNLYNETVET) the chain is Extracellular. N-linked (GlcNAc...) asparagine glycosylation occurs at N81. The helical transmembrane segment at 87-107 (LMAGEVSAMVGSAVWQLIASF) threads the bilayer. Residues 108 to 109 (LR) are Cytoplasmic-facing. A helical transmembrane segment spans residues 110–130 (LPISGTHCIVGSTIGFSLVAI). Residues 131–142 (GTKGVQWMELVK) lie on the Extracellular side of the membrane. A helical membrane pass occupies residues 143-163 (IVASWFISPLLSGFMSGLLFV). Topologically, residues 164–190 (LIRIFILKKEDPVPNGLRALPVFYAAT) are cytoplasmic. Residues 191-211 (IAINVFSIMYTGAPVLGLVLP) form a helical membrane-spanning segment. Over 212-213 (MW) the chain is Extracellular. A helical membrane pass occupies residues 214-234 (AIALISFGVALLFAFFVWLFV). The Cytoplasmic segment spans residues 235 to 482 (CPWMRRKITG…EEKEEKDAPE (248 aa)). Residues S253, S256, S259, and S268 each carry the phosphoserine modification. Positions 273-307 (ELPGAKANDDSTIPLTGAAGETLGTSEGTSAGSHP) are disordered. Residues 295–304 (LGTSEGTSAG) are compositionally biased toward polar residues. 2 positions are modified to phosphoserine: S316 and S385. A disordered region spans residues 458–477 (SELADPDQPREDPAEEEKEE). The chain crosses the membrane as a helical span at residues 483–503 (VHLLFHFLQVLTACFGSFAHG). Residues 504-530 (GNDVSNAIGPLVALWLIYKQGGVTQEA) lie on the Extracellular side of the membrane. Residues 531–551 (ATPVWLLFYGGVGICTGLWVW) traverse the membrane as a helical segment. Residues 552-571 (GRRVIQTMGKDLTPITPSSG) lie on the Cytoplasmic side of the membrane. A helical transmembrane segment spans residues 572–586 (FTIELASAFTVVIAS). The Extracellular segment spans residues 587–593 (NIGLPVS). The helical transmembrane segment at 594–609 (TTHCKVGSVVAVGWIR) threads the bilayer. Residues 610 to 621 (SRKAVDWRLFRN) lie on the Cytoplasmic side of the membrane. Residues 622-642 (IFVAWFVTVPVAGLFSAAVMA) traverse the membrane as a helical segment. Residues 643–652 (LLMYGILPYV) are Extracellular-facing.

It belongs to the inorganic phosphate transporter (PiT) (TC 2.A.20) family. As to quaternary structure, homodimer. Ubiquitously expressed.

The protein resides in the cell membrane. The protein localises to the apical cell membrane. It catalyses the reaction 2 Na(+)(out) + phosphate(out) = 2 Na(+)(in) + phosphate(in). Its function is as follows. Sodium-phosphate symporter which preferentially transports the monovalent form of phosphate with a stoichiometry of two sodium ions per phosphate ion. Plays a critical role in the determination of bone quality and strength by providing phosphate for bone mineralization. Required to maintain normal cerebrospinal fluid phosphate levels. Mediates phosphate-induced calcification of vascular smooth muscle cells (VCMCs) and can functionally compensate for loss of SLC20A1 in VCMCs. Functionally, (Microbial infection) Functions as a retroviral receptor and confers human cells susceptibility to infection to amphotropic murine leukemia virus (A-MuLV), 10A1 murine leukemia virus (10A1 MLV) and some feline leukemia virus subgroup B (FeLV-B) variants. The polypeptide is Sodium-dependent phosphate transporter 2 (SLC20A2) (Homo sapiens (Human)).